A 1091-amino-acid chain; its full sequence is Voltage-dependent calcium channel subunit alpha-2/delta-1 (1091 aa).

The first 24 residues, 1 to 24 (MAAGCLLALTLTLFQSWLIGPSSE), serve as a signal peptide directing secretion. Topologically, residues 25 to 1061 (EPFPSPVTIK…VLEDYTDCGG (1037 aa)) are extracellular. An N-linked (GlcNAc...) asparagine glycan is attached at N92. S119 is modified (phosphoserine). Residues N136 and N184 are each glycosylated (N-linked (GlcNAc...) asparagine). In terms of domain architecture, VWFA spans 252–429 (DMLILVDVSG…INTQEYLDVL (178 aa)). D258, S260, and S262 together coordinate a divalent metal cation. Positions 258 to 262 (DVSGS) match the MIDAS-like motif motif. N-linked (GlcNAc...) asparagine glycosylation is found at N323 and N347. Residues C403 and C1047 are joined by a disulfide bond. The Cache domain occupies 445–536 (WTNVYLDALE…QPKNPKSQEP (92 aa)). N-linked (GlcNAc...) asparagine glycans are attached at residues N593, N769, N876, and N973. The chain crosses the membrane as a helical span at residues 1062–1082 (VSGLNPSLWSIFGLQFILLWL). The Cytoplasmic portion of the chain corresponds to 1083–1091 (VSGSRHYLW).

It belongs to the calcium channel subunit alpha-2/delta family. As to quaternary structure, dimer formed of alpha-2-1 and delta-1 chains; disulfide-linked. Voltage-dependent calcium channels are multisubunit complexes, consisting of alpha-1 (CACNA1), alpha-2 (CACNA2D), beta (CACNB) and delta (CACNA2D) subunits in a 1:1:1:1 ratio. In terms of processing, proteolytically processed into subunits alpha-2-1 and delta-1 that are disulfide-linked.

Its subcellular location is the membrane. It is found in the cell membrane. Functionally, the alpha-2/delta subunit of voltage-dependent calcium channels regulates calcium current density and activation/inactivation kinetics of the calcium channel. Plays an important role in excitation-contraction coupling. In Rattus norvegicus (Rat), this protein is Voltage-dependent calcium channel subunit alpha-2/delta-1 (Cacna2d1).